The following is a 127-amino-acid chain: MSNTDSKTGPNTDPATCELDPAIAERVRFNADGLVPAIVQDITNGDVLMMAWMNDHALAHTLATKKGTYWSRSRQSYWIKGETSGHTQRVEEVRLDCDGDTVLLKIEQTGAACHTGNRTCFDADRLA.

A Mg(2+)-binding site is contributed by Asp96. Cys97 is a binding site for Zn(2+). Positions 98 and 100 each coordinate Mg(2+). Zn(2+) is bound by residues Cys113 and Cys120.

Belongs to the PRA-CH family. As to quaternary structure, homodimer. Mg(2+) is required as a cofactor. Requires Zn(2+) as cofactor.

The protein resides in the cytoplasm. The enzyme catalyses 1-(5-phospho-beta-D-ribosyl)-5'-AMP + H2O = 1-(5-phospho-beta-D-ribosyl)-5-[(5-phospho-beta-D-ribosylamino)methylideneamino]imidazole-4-carboxamide. It participates in amino-acid biosynthesis; L-histidine biosynthesis; L-histidine from 5-phospho-alpha-D-ribose 1-diphosphate: step 3/9. In terms of biological role, catalyzes the hydrolysis of the adenine ring of phosphoribosyl-AMP. In Corynebacterium jeikeium (strain K411), this protein is Phosphoribosyl-AMP cyclohydrolase.